A 617-amino-acid polypeptide reads, in one-letter code: Leucine aminopeptidase 2 (617 aa).

A peptide-binding positions include 139 to 141 and 271 to 276; these read QCQ and PYGGME. His300 provides a ligand contact to Zn(2+). Glu301 functions as the Proton acceptor in the catalytic mechanism. Positions 304 and 323 each coordinate Zn(2+). The Proton donor role is filled by Tyr388.

This sequence belongs to the peptidase M1 family. Zn(2+) serves as cofactor.

It localises to the cytoplasm. It is found in the nucleus. It carries out the reaction an epoxide + H2O = an ethanediol. Functionally, aminopeptidase that preferentially cleaves di- and tripeptides. Also has low epoxide hydrolase activity (in vitro). Can hydrolyze the epoxide leukotriene LTA(4) but it forms preferentially 5,6-dihydroxy-7,9,11,14-eicosatetraenoic acid rather than the cytokine leukotriene B(4) as the product compared to the homologous mammalian enzyme (in vitro). This chain is Leucine aminopeptidase 2, found in Aspergillus terreus (strain NIH 2624 / FGSC A1156).